The primary structure comprises 344 residues: MQLEIKVALNFIISYLYNKLPRRRADLFGEELERLLKKKYEGHWYPEKPLKGSGFRCVHIGEMVDPVVELAAKRSGLAVEDVRANVPEELSVWIDPFEVSYQIGEKGAVKVLYLDDSEGCGAPELDKEIKSSFNPDAQVFVPIGSQDSSLSNSPSPSFGQSPSPTFIPRSAQPITFTTASFAATKFGSTKMKKGGGAASGGGVASSGAGGQQPPQQPRMARSPTNSLLKHKSLSLSMHSLNFITANPAPQSQLSPNAKEFVYNGGGSPSLFFDAADGQGSGTPGPFGGSGAGTCNSSSFDMAQVFGGGANSLFLEKTPFVEGLSYNLNTMQYPSQQFQPVVLAN.

Disordered regions lie at residues 144 to 169 and 191 to 225; these read GSQD…FIPR and MKKG…SPTN. Residues 145–164 are compositionally biased toward low complexity; the sequence is SQDSSLSNSPSPSFGQSPSP. Positions 194 to 210 are enriched in gly residues; the sequence is GGGAASGGGVASSGAGG. The segment covering 211 to 225 has biased composition (low complexity); it reads QQPPQQPRMARSPTN. A Phosphoserine modification is found at serine 254.

It belongs to the BTG family. Associates with CAF1. As to expression, ubiquitous.

Its subcellular location is the cytoplasm. In terms of biological role, anti-proliferative protein inhibits cell cycle progression from the G0/G1 to S phases. This Homo sapiens (Human) protein is Protein Tob2 (TOB2).